The following is a 181-amino-acid chain: Ribulose bisphosphate carboxylase small subunit 3B, chloroplastic (181 aa).

Residues 1 to 54 constitute a chloroplast transit peptide; the sequence is MASSMLSSAAVVTSPAQATMVAPFTGLKSSAAFPVTRKTNKDITSIASNGGRVS.

The protein belongs to the RuBisCO small chain family. As to quaternary structure, heterohexadecamer of 8 large and 8 small subunits.

Its subcellular location is the plastid. The protein resides in the chloroplast. Its function is as follows. RuBisCO catalyzes two reactions: the carboxylation of D-ribulose 1,5-bisphosphate, the primary event in carbon dioxide fixation, as well as the oxidative fragmentation of the pentose substrate. Both reactions occur simultaneously and in competition at the same active site. Although the small subunit is not catalytic it is essential for maximal activity. The polypeptide is Ribulose bisphosphate carboxylase small subunit 3B, chloroplastic (RBCS-3B) (Arabidopsis thaliana (Mouse-ear cress)).